We begin with the raw amino-acid sequence, 106 residues long: Thiosulfate sulfurtransferase GlpE (106 aa).

Positions 17 to 105 (QLPSVCLADI…WRHVYPYTAT (89 aa)) constitute a Rhodanese domain. Cysteine 65 functions as the Cysteine persulfide intermediate in the catalytic mechanism.

The protein belongs to the GlpE family.

The protein resides in the cytoplasm. The enzyme catalyses thiosulfate + hydrogen cyanide = thiocyanate + sulfite + 2 H(+). The catalysed reaction is thiosulfate + [thioredoxin]-dithiol = [thioredoxin]-disulfide + hydrogen sulfide + sulfite + 2 H(+). Transferase that catalyzes the transfer of sulfur from thiosulfate to thiophilic acceptors such as cyanide or dithiols. May function in a CysM-independent thiosulfate assimilation pathway by catalyzing the conversion of thiosulfate to sulfite, which can then be used for L-cysteine biosynthesis. In Tolumonas auensis (strain DSM 9187 / NBRC 110442 / TA 4), this protein is Thiosulfate sulfurtransferase GlpE.